The chain runs to 92 residues: Acylphosphatase (92 aa).

The 89-residue stretch at 4 to 92 (AVQLDVFGRV…SACHKFSVVG (89 aa)) folds into the Acylphosphatase-like domain. Residues Arg19 and Asn37 contribute to the active site.

This sequence belongs to the acylphosphatase family.

The enzyme catalyses an acyl phosphate + H2O = a carboxylate + phosphate + H(+). This chain is Acylphosphatase (acyP), found in Latilactobacillus sakei subsp. sakei (strain 23K) (Lactobacillus sakei subsp. sakei).